The chain runs to 1396 residues: DNA-directed RNA polymerase subunit beta' (1396 aa).

Zn(2+) contacts are provided by cysteine 73, cysteine 75, cysteine 88, and cysteine 91. The Mg(2+) site is built by aspartate 467, aspartate 469, and aspartate 471. Zn(2+) is bound by residues cysteine 817, cysteine 891, cysteine 898, and cysteine 901.

It belongs to the RNA polymerase beta' chain family. As to quaternary structure, the RNAP catalytic core consists of 2 alpha, 1 beta, 1 beta' and 1 omega subunit. When a sigma factor is associated with the core the holoenzyme is formed, which can initiate transcription. Requires Mg(2+) as cofactor. It depends on Zn(2+) as a cofactor.

It carries out the reaction RNA(n) + a ribonucleoside 5'-triphosphate = RNA(n+1) + diphosphate. Functionally, DNA-dependent RNA polymerase catalyzes the transcription of DNA into RNA using the four ribonucleoside triphosphates as substrates. The chain is DNA-directed RNA polymerase subunit beta' from Orientia tsutsugamushi (strain Boryong) (Rickettsia tsutsugamushi).